A 69-amino-acid polypeptide reads, in one-letter code: uncharacterized protein (69 aa).

The next 2 membrane-spanning stretches (helical) occupy residues 15-35 and 36-56; these read LIIG…ICYV and LYII…IPKT.

Its subcellular location is the cell membrane. This is an uncharacterized protein from Methanocaldococcus jannaschii (strain ATCC 43067 / DSM 2661 / JAL-1 / JCM 10045 / NBRC 100440) (Methanococcus jannaschii).